A 65-amino-acid polypeptide reads, in one-letter code: MKQLNSEQLQNIIGGNRWTNAYSAALGCAVPGVKYGKKLGGVWGAVIGGVGGAAVCGLAGYVRKG.

A propeptide spanning residues 1 to 15 (MKQLNSEQLQNIIGG) is cleaved from the precursor. A helical transmembrane segment spans residues 39–59 (LGGVWGAVIGGVGGAAVCGLA).

Active lactobin is composed of two different peptides, one which is lactobin A.

The protein localises to the secreted. It localises to the host cell membrane. Functionally, this heat stable bacteriocin inhibits the growth of closely related Lactobacillus species. It may act as a pore-forming protein, creating a channel in the cell membrane. It kills Lactobacillus helveticus ATCC 15009, but displays no activity towards Listeria species. The protein is Bacteriocin amylovorin-L (amyL) of Lactobacillus amylovorus.